The primary structure comprises 449 residues: Secretin receptor (449 aa).

The N-terminal stretch at 1–25 (MLSTMRPRLSLLLLRLLLLTKAAHT) is a signal peptide. At 26–141 (VGVPPRLCDV…NERRHAYLLK (116 aa)) the chain is on the extracellular side. Disulfide bonds link C46/C75, C66/C107, and C89/C123. 4 N-linked (GlcNAc...) asparagine glycosylation sites follow: N72, N100, N106, and N128. A helical membrane pass occupies residues 142–167 (LKVMYTVGYSSSLAMLLVALSILCSF). At 168–174 (RRLHCTR) the chain is on the cytoplasmic side. A helical membrane pass occupies residues 175–195 (NYIHMHLFVSFILRALSNFIK). Over 196-216 (DAVLFSSDDVTYCDAHKVGCK) the chain is Extracellular. C215 and C285 are oxidised to a cystine. Residues 217 to 239 (LVMIFFQYCIMANYAWLLVEGLY) traverse the membrane as a helical segment. Topologically, residues 240 to 254 (LHTLLAISFFSERKY) are cytoplasmic. The helical transmembrane segment at 255–276 (LQAFVLLGWGSPAIFVALWAIT) threads the bilayer. Residues 277-291 (RHFLENTGCWDINAN) lie on the Extracellular side of the membrane. A glycan (N-linked (GlcNAc...) asparagine) is linked at N291. The chain crosses the membrane as a helical span at residues 292–315 (ASVWWVIRGPVILSILINFIFFIN). The Cytoplasmic portion of the chain corresponds to 316-340 (ILRILMRKLRTQETRGSETNHYKRL). The chain crosses the membrane as a helical span at residues 341–356 (AKSTLLLIPLFGIHYI). Residues 357–367 (VFAFSPEDAME) lie on the Extracellular side of the membrane. The helical transmembrane segment at 368 to 391 (VQLFFELALGSFQGLVVAVLYCFL) threads the bilayer. Residues 392–449 (NGEVQLEVQKKWRQWHLQEFPLRPVAFNNSFSNATNGPTHSTKASTEQSRSIPRASII) are Cytoplasmic-facing. Polar residues predominate over residues 425–442 (ATNGPTHSTKASTEQSRS). The tract at residues 425 to 449 (ATNGPTHSTKASTEQSRSIPRASII) is disordered.

Belongs to the G-protein coupled receptor 2 family. Post-translationally, phosphorylated on Ser and Thr residues at the cytoplasmic C-terminus by G protein-coupled receptor kinases (GRKs). N-glycosylated. In terms of tissue distribution, in the brain, expressed in the central amygdala, hippocampus, area postrema, nucleus of the tractus solitary and cerebellum.

Its subcellular location is the cell membrane. It is found in the basolateral cell membrane. G protein-coupled receptor activated by secretin (SCT), which is involved in different processes such as regulation of the pH of the duodenal content, food intake and water homeostasis. Ligand binding causes a conformation change that triggers signaling via guanine nucleotide-binding proteins (G proteins) and activates cAMP-dependent pathway. Upon binding to secretin, regulates the pH of the duodenum by (1) inhibiting the secretion of gastric acid from the parietal cells of the stomach and (2) stimulating the production of bicarbonate (NaHCO(3)) from the ductal cells of the pancreas. In addition to regulating the pH of the duodenal content, plays a central role in diet induced thermogenesis: acts as a non-sympathetic brown fat (BAT) activator mediating prandial thermogenesis, which consequentially induces satiation. Mechanistically, secretin released by the gut after a meal binds to secretin receptor (SCTR) in brown adipocytes, activating brown fat thermogenesis by stimulating lipolysis, which is sensed in the brain and promotes satiation. Also able to stimulate lipolysis in white adipocytes. Also plays an important role in cellular osmoregulation by regulating renal water reabsorption. Also plays a role in the central nervous system: required for synaptic plasticity. This Rattus norvegicus (Rat) protein is Secretin receptor.